The primary structure comprises 122 residues: Large ribosomal subunit protein bL12 (122 aa).

A disordered region spans residues alanine 96–threonine 122. A compositionally biased stretch (basic and acidic residues) spans leucine 104–threonine 122.

The protein belongs to the bacterial ribosomal protein bL12 family. As to quaternary structure, homodimer. Part of the ribosomal stalk of the 50S ribosomal subunit. Forms a multimeric L10(L12)X complex, where L10 forms an elongated spine to which 2 to 4 L12 dimers bind in a sequential fashion. Binds GTP-bound translation factors.

Its function is as follows. Forms part of the ribosomal stalk which helps the ribosome interact with GTP-bound translation factors. Is thus essential for accurate translation. The protein is Large ribosomal subunit protein bL12 of Liberibacter asiaticus (Citrus greening disease).